Here is a 386-residue protein sequence, read N- to C-terminus: Lycopene beta-cyclase (386 aa).

4-34 (DVLLAGAGLANGLIALALRAARPDLRVLLLD) contacts NAD(+).

Belongs to the lycopene cyclase family. FAD serves as cofactor.

It carries out the reaction a carotenoid psi-end group = a carotenoid beta-end derivative. The enzyme catalyses all-trans-lycopene = gamma-carotene. The catalysed reaction is gamma-carotene = all-trans-beta-carotene. It functions in the pathway carotenoid biosynthesis; astaxanthin biosynthesis. Its function is as follows. Catalyzes the double cyclization reaction which converts lycopene to beta-carotene. This chain is Lycopene beta-cyclase, found in Paracoccus sp. (strain N81106 / MBIC 01143) (Agrobacterium aurantiacum).